Here is a 407-residue protein sequence, read N- to C-terminus: Flagellar calcium-binding protein TB-44A (407 aa).

Positions 1 to 27 are disordered; sequence MGCSASKDTTNSKDGAASKGGKDGKTT. A 2 X 186 AA almost perfect repeats region spans residues 25–399; the sequence is KTTADRKVAW…LQVCGDPDGE (375 aa). In terms of domain architecture, EF-hand 1 spans 48-83; that stretch reads ESKSRRIELFKRFDTNGTGKLSFREVLDGCYSILKL. The Ca(2+) site is built by Asp-61, Asn-63, Thr-65, Lys-67, and Glu-72. Residues 110–121 form an ancestral calcium site 2 region; it reads GVGEEDLVEFLE. 3 consecutive EF-hand domains span residues 130–165, 167–202, and 237–272; these read YDIFELTVMFDTMDKDGSLLLELQEFKEALPKWKEW, VDITDATTVFNEIDTNGSGVVTFDEFSCWAVTKKLQ, and ESKSRRIELFKQFDTNGTGKLGFREVLDGCYSILKL. Positions 143, 145, 147, 154, 180, 182, 184, 191, 250, 252, 254, 256, and 261 each coordinate Ca(2+). Positions 299-310 are ancestral calcium site 6; sequence GVGEEDLVEFLE. EF-hand domains follow at residues 319 to 354 and 356 to 391; these read YDIFELTVMFDTMDKDGSLLLELQEFKEALKKWKEW and VDITDATTVFNEIDTNGSGVVTFDEFSCWAVTKKLQ. 8 residues coordinate Ca(2+): Asp-332, Asp-334, Ser-336, Glu-343, Asp-369, Asn-371, Ser-373, and Glu-380.

Belongs to the calflagin family.

The protein localises to the cell projection. Its subcellular location is the cilium. It localises to the flagellum. Its function is as follows. May contribute to the rapid motility of the trypanosomes, playing a role either in flagellar structure or in calcium metabolism. Could alternate between a GDP-bound inactive form to a calcium/GTP-bound active form. This is Flagellar calcium-binding protein TB-44A from Trypanosoma brucei brucei.